Reading from the N-terminus, the 422-residue chain is Tyrosine--tRNA ligase 1 (422 aa).

Tyr36 contacts L-tyrosine. The 'HIGH' region motif lies at 41–50; that stretch reads PTAGSLHIGH. Residues Tyr173 and Gln177 each contribute to the L-tyrosine site. The 'KMSKS' region signature appears at 233 to 237; sequence KFGKT. Residue Lys236 participates in ATP binding. The region spanning 355-419 is the S4 RNA-binding domain; the sequence is SDVVTLLLET…GKKQFAMVKL (65 aa).

The protein belongs to the class-I aminoacyl-tRNA synthetase family. TyrS type 1 subfamily. As to quaternary structure, homodimer.

Its subcellular location is the cytoplasm. It catalyses the reaction tRNA(Tyr) + L-tyrosine + ATP = L-tyrosyl-tRNA(Tyr) + AMP + diphosphate + H(+). Functionally, catalyzes the attachment of tyrosine to tRNA(Tyr) in a two-step reaction: tyrosine is first activated by ATP to form Tyr-AMP and then transferred to the acceptor end of tRNA(Tyr). The protein is Tyrosine--tRNA ligase 1 of Vibrio vulnificus (strain YJ016).